The primary structure comprises 112 residues: Small ribosomal subunit protein uS17 (112 aa).

This sequence belongs to the universal ribosomal protein uS17 family. In terms of assembly, part of the 30S ribosomal subunit.

Functionally, one of the primary rRNA binding proteins, it binds specifically to the 5'-end of 16S ribosomal RNA. This chain is Small ribosomal subunit protein uS17, found in Haloarcula marismortui (strain ATCC 43049 / DSM 3752 / JCM 8966 / VKM B-1809) (Halobacterium marismortui).